The chain runs to 1807 residues: Nucleoporin nup189 (1807 aa).

The segment at 1–118 (MFGQNNSSGF…SGGGLFGSNT (118 aa)) is disordered. GLFG repeat units lie at residues 26 to 29 (GLFG) and 66 to 69 (GLFG). Polar residues predominate over residues 29–61 (GSNSNTPGNTLFGSQNTSTTGFGQNTTQPLFGS). Positions 62 to 77 (NTNGGLFGNRNNTTTT) are enriched in low complexity. Positions 78-90 (GGTGFGMSSGTGM) are enriched in gly residues. Over residues 93 to 108 (QSNTPAFGGTNNATNP) the composition is skewed to polar residues. 10 GLFG repeats span residues 112-115 (GLFG), 152-155 (GLFG), 177-180 (GLFG), 308-311 (GLFG), 335-338 (GLFG), 350-353 (GLFG), 381-384 (GLFG), 399-402 (GLFG), 435-438 (GLFG), and 521-524 (GLFG). The span at 565-584 (PGTGLFGSTQTNNATSNTGT) shows a compositional bias: polar residues. The tract at residues 565 to 685 (PGTGLFGSTQ…SSTTSQVAPT (121 aa)) is disordered. GLFG repeat units lie at residues 585 to 588 (GLFG), 611 to 614 (GLFG), 627 to 630 (GLFG), and 646 to 649 (GLFG). The segment covering 588 to 600 (GSNNANTTNTGGS) has biased composition (low complexity). Polar residues predominate over residues 603–644 (NKPSTTTGGLFGNTTAQQPSTTTSGLFGASNTNNQAQTSNFG). Residues 653-663 (AGQQQQPLQAS) are compositionally biased toward low complexity. Residues 664-685 (IDQNPYGNNPLFSSTTSQVAPT) show a composition bias toward polar residues. Serine 724 carries the phosphoserine modification. Positions 785-814 (QNGVKNGNDAKSDSKVQEKAPQNEADGSLK) are disordered. Residues 792–802 (NDAKSDSKVQE) show a composition bias toward basic and acidic residues. A Peptidase S59 domain is found at 822–963 (SDDYWMKPSI…GKWIFKVQHF (142 aa)). Positions 974–1020 (EENDMSSTSNEAGNLKKYDQPNLKVSGKNDSFVTHHTPGAFPNDSKN) are disordered. Serine 1051 is modified (phosphoserine). A disordered region spans residues 1082-1104 (KENNVPLSEDDLSNSSESSNESV). A compositionally biased stretch (low complexity) spans 1094 to 1104 (SNSSESSNESV).

It belongs to the nucleoporin GLFG family. In terms of assembly, interacts (via G-L-F-G repeats) with rpn15/dss1. Interacts with raf1. Interacts with ned1. Nup189 is autocatalytically cleaved in nup98 and nup96.

The protein localises to the nucleus. Its subcellular location is the nuclear pore complex. Functions as a component of the nuclear pore complex (NPC). NPC components, collectively referred to as nucleoporins (NUPs), can play the role of both NPC structural components and of docking or interaction partners for transiently associated nuclear transport factors. Active directional transport is assured by both, a Phe-Gly (FG) repeat affinity gradient for these transport factors across the NPC and a transport cofactor concentration gradient across the nuclear envelope. Nup189 is autocatalytically cleaved in vivo in 2 polypeptides which assume different functions in the NPC. Nup98 as one of the FG repeat nucleoporins participates in karyopherin interactions and contains part of the autocatalytic cleavage activity. Nup96 as part of the NUP84 complex is involved in nuclear poly(A)+ RNA and tRNA export. The sequence is that of Nucleoporin nup189 (nup189) from Schizosaccharomyces pombe (strain 972 / ATCC 24843) (Fission yeast).